A 536-amino-acid polypeptide reads, in one-letter code: Glycine-rich extracellular protein 1 (536 aa).

The N-terminal stretch at 1 to 22 (MGAWAFPAALFLLCLTSESLQG) is a signal peptide. Disordered stretches follow at residues 111–134 (AQNG…TTQN), 306–336 (GAGE…NGPW), and 500–536 (GDEY…LGKC). Residues 115-124 (FGPGFGGGGK) are compositionally biased toward gly residues. The span at 521 to 536 (GQLGNGYGGRCPLGKC) shows a compositional bias: gly residues.

This Homo sapiens (Human) protein is Glycine-rich extracellular protein 1.